A 100-amino-acid polypeptide reads, in one-letter code: Probable antitoxin MazE4 (100 aa).

Positions 77–100 are disordered; it reads PYESEAERSAARARRNARQQRSAQ.

Forms a complex with cognate toxin MazF4.

Antitoxin component of a type II toxin-antitoxin (TA) system. Labile antitoxin that binds to cognate MazF4 toxin and counteracts its endoribonuclease activity. This Mycobacterium tuberculosis (strain CDC 1551 / Oshkosh) protein is Probable antitoxin MazE4 (mazE4).